The sequence spans 169 residues: Vimentin-type intermediate filament-associated coiled-coil protein (169 aa).

The stretch at 7 to 89 (LQIREANAHL…VHSLQATVHQ (83 aa)) forms a coiled coil. The span at 126-135 (RLGPLPASDP) shows a compositional bias: low complexity. The disordered stretch occupies residues 126-169 (RLGPLPASDPGHPPPGGPGPPLDNSTGEEADRDHLQPAVFGTTV). The span at 136–146 (GHPPPGGPGPP) shows a compositional bias: pro residues.

The protein resides in the cytoplasm. The polypeptide is Vimentin-type intermediate filament-associated coiled-coil protein (VMAC) (Homo sapiens (Human)).